An 86-amino-acid polypeptide reads, in one-letter code: Large ribosomal subunit protein bL27 (86 aa).

A compositionally biased stretch (gly residues) spans 1 to 10 (MAQKKGGGST). The interval 1 to 21 (MAQKKGGGSTRNGRDSESKRL) is disordered.

The protein belongs to the bacterial ribosomal protein bL27 family.

This Bordetella petrii (strain ATCC BAA-461 / DSM 12804 / CCUG 43448) protein is Large ribosomal subunit protein bL27.